The following is a 200-amino-acid chain: Adenylate kinase (200 aa).

Position 11 to 16 (11 to 16 (GAGKGT)) interacts with ATP. The segment at 31–60 (STGDIFRQNIKDRTELGQQVQALVDAGNYV) is NMP. Residues Thr-32, Arg-37, 58 to 60 (NYV), 86 to 89 (GYPR), and Gln-93 contribute to the AMP site. An LID region spans residues 127 to 137 (RRAAEQGRADD). Arg-128 contacts ATP. AMP-binding residues include Arg-134 and Arg-145. Gly-173 provides a ligand contact to ATP.

Belongs to the adenylate kinase family. As to quaternary structure, monomer.

The protein localises to the cytoplasm. It catalyses the reaction AMP + ATP = 2 ADP. Its pathway is purine metabolism; AMP biosynthesis via salvage pathway; AMP from ADP: step 1/1. Its function is as follows. Catalyzes the reversible transfer of the terminal phosphate group between ATP and AMP. Plays an important role in cellular energy homeostasis and in adenine nucleotide metabolism. In Clavibacter michiganensis subsp. michiganensis (strain NCPPB 382), this protein is Adenylate kinase.